We begin with the raw amino-acid sequence, 84 residues long: Small ribosomal subunit protein bS18 (84 aa).

Belongs to the bacterial ribosomal protein bS18 family. As to quaternary structure, part of the 30S ribosomal subunit. Forms a tight heterodimer with protein bS6.

In terms of biological role, binds as a heterodimer with protein bS6 to the central domain of the 16S rRNA, where it helps stabilize the platform of the 30S subunit. The protein is Small ribosomal subunit protein bS18 of Clostridium kluyveri (strain NBRC 12016).